The following is a 374-amino-acid chain: Methionine import ATP-binding protein MetN 2 (374 aa).

An ABC transporter domain is found at 32–271 (VRFVGLGKTY…PQHEVSQTLL (240 aa)). 68–75 (GRSGAGKS) contacts ATP.

This sequence belongs to the ABC transporter superfamily. Methionine importer (TC 3.A.1.24) family. As to quaternary structure, the complex is composed of two ATP-binding proteins (MetN), two transmembrane proteins (MetI) and a solute-binding protein (MetQ).

The protein localises to the cell inner membrane. It catalyses the reaction L-methionine(out) + ATP + H2O = L-methionine(in) + ADP + phosphate + H(+). It carries out the reaction D-methionine(out) + ATP + H2O = D-methionine(in) + ADP + phosphate + H(+). Functionally, part of the ABC transporter complex MetNIQ involved in methionine import. Responsible for energy coupling to the transport system. The protein is Methionine import ATP-binding protein MetN 2 of Pseudomonas fluorescens (strain Pf0-1).